The sequence spans 94 residues: Aspartyl/glutamyl-tRNA(Asn/Gln) amidotransferase subunit C (94 aa).

It belongs to the GatC family. Heterotrimer of A, B and C subunits.

It catalyses the reaction L-glutamyl-tRNA(Gln) + L-glutamine + ATP + H2O = L-glutaminyl-tRNA(Gln) + L-glutamate + ADP + phosphate + H(+). It carries out the reaction L-aspartyl-tRNA(Asn) + L-glutamine + ATP + H2O = L-asparaginyl-tRNA(Asn) + L-glutamate + ADP + phosphate + 2 H(+). Functionally, allows the formation of correctly charged Asn-tRNA(Asn) or Gln-tRNA(Gln) through the transamidation of misacylated Asp-tRNA(Asn) or Glu-tRNA(Gln) in organisms which lack either or both of asparaginyl-tRNA or glutaminyl-tRNA synthetases. The reaction takes place in the presence of glutamine and ATP through an activated phospho-Asp-tRNA(Asn) or phospho-Glu-tRNA(Gln). The sequence is that of Aspartyl/glutamyl-tRNA(Asn/Gln) amidotransferase subunit C from Carboxydothermus hydrogenoformans (strain ATCC BAA-161 / DSM 6008 / Z-2901).